The primary structure comprises 500 residues: L-arabinose isomerase (500 aa).

Residues E306, E333, H350, and H450 each contribute to the Mn(2+) site.

Belongs to the arabinose isomerase family. As to quaternary structure, homohexamer. Mn(2+) is required as a cofactor.

The catalysed reaction is beta-L-arabinopyranose = L-ribulose. It participates in carbohydrate degradation; L-arabinose degradation via L-ribulose; D-xylulose 5-phosphate from L-arabinose (bacterial route): step 1/3. In terms of biological role, catalyzes the conversion of L-arabinose to L-ribulose. The polypeptide is L-arabinose isomerase (Escherichia coli O7:K1 (strain IAI39 / ExPEC)).